A 184-amino-acid chain; its full sequence is Probable cobalt-precorrin-6B C(15)-methyltransferase (decarboxylating) (184 aa).

Residues threonine 12, 36 to 40 (GCGTG), aspartate 59, and alanine 87 contribute to the S-adenosyl-L-methionine site.

Belongs to the methyltransferase superfamily. Archaeal-type CbiT family.

The catalysed reaction is Co-precorrin-6B + S-adenosyl-L-methionine = Co-precorrin-7 + S-adenosyl-L-homocysteine + CO2. The protein operates within cofactor biosynthesis; adenosylcobalamin biosynthesis; cob(II)yrinate a,c-diamide from sirohydrochlorin (anaerobic route): step 8/10. In terms of biological role, catalyzes the methylation of C-15 in cobalt-precorrin-6B followed by the decarboxylation of C-12 to form cobalt-precorrin-7. This is Probable cobalt-precorrin-6B C(15)-methyltransferase (decarboxylating) from Methanosarcina acetivorans (strain ATCC 35395 / DSM 2834 / JCM 12185 / C2A).